Reading from the N-terminus, the 112-residue chain is Small capsomere-interacting protein (112 aa).

Belongs to the herpesviridae small capsomere-interacting protein family. As to quaternary structure, interacts with the major capsid protein/MCP.

Its subcellular location is the virion. It localises to the host nucleus. Functionally, participates in the assembly of the infectious particles by decorating the outer surface of the capsid shell and thus forming a layer between the capsid and the tegument. Complexes composed of the major capsid protein and small capsomere-interacting protein/SCP assemble together in the host cytoplasm and are translocated to the nucleus, where they accumulate and participate in capsid assembly. This chain is Small capsomere-interacting protein, found in Homo sapiens (Human).